Consider the following 435-residue polypeptide: Centrosomal protein of 55 kDa (435 aa).

3 disordered regions span residues 1–63 (MAAK…TDKA), 213–239 (HKEA…KVSR), and 268–287 (ERRR…ALLQ). 2 coiled-coil regions span residues 18 to 140 (SSSS…KNKY) and 185 to 373 (EAYV…RESR). Composition is skewed to basic and acidic residues over residues 26 to 49 (AELE…DMKR) and 213 to 222 (HKEAKSDDQS).

It is found in the cytoplasm. The protein localises to the cytoskeleton. Its subcellular location is the microtubule organizing center. The protein resides in the centrosome. It localises to the centriole. It is found in the cleavage furrow. The protein localises to the midbody. Its subcellular location is the midbody ring. In terms of biological role, plays a role in mitotic exit and cytokinesis. Recruits PDCD6IP and TSG101 to midbody during cytokinesis. Required for successful completion of cytokinesis. Not required for microtubule nucleation. Plays a role in the development of the brain and kidney. In Danio rerio (Zebrafish), this protein is Centrosomal protein of 55 kDa.